Reading from the N-terminus, the 397-residue chain is Tryptophan synthase beta chain (397 aa).

An N6-(pyridoxal phosphate)lysine modification is found at Lys91.

The protein belongs to the TrpB family. As to quaternary structure, tetramer of two alpha and two beta chains. The cofactor is pyridoxal 5'-phosphate.

It carries out the reaction (1S,2R)-1-C-(indol-3-yl)glycerol 3-phosphate + L-serine = D-glyceraldehyde 3-phosphate + L-tryptophan + H2O. The protein operates within amino-acid biosynthesis; L-tryptophan biosynthesis; L-tryptophan from chorismate: step 5/5. In terms of biological role, the beta subunit is responsible for the synthesis of L-tryptophan from indole and L-serine. The sequence is that of Tryptophan synthase beta chain from Bacillus cereus (strain G9842).